The following is a 121-amino-acid chain: Ribonuclease P protein component (121 aa).

Belongs to the RnpA family. Consists of a catalytic RNA component (M1 or rnpB) and a protein subunit.

It catalyses the reaction Endonucleolytic cleavage of RNA, removing 5'-extranucleotides from tRNA precursor.. RNaseP catalyzes the removal of the 5'-leader sequence from pre-tRNA to produce the mature 5'-terminus. It can also cleave other RNA substrates such as 4.5S RNA. The protein component plays an auxiliary but essential role in vivo by binding to the 5'-leader sequence and broadening the substrate specificity of the ribozyme. The polypeptide is Ribonuclease P protein component (Chromobacterium violaceum (strain ATCC 12472 / DSM 30191 / JCM 1249 / CCUG 213 / NBRC 12614 / NCIMB 9131 / NCTC 9757 / MK)).